A 553-amino-acid chain; its full sequence is Phospholipase B-like 1 (553 aa).

Residues 1–38 form the signal peptide; that stretch reads MTRGGPGGRPGLPQPPPLLLLLLLLPLLLVTAEPPKPA. Asn71 carries N-linked (GlcNAc...) (high mannose) asparagine; alternate glycosylation. A glycan (N-linked (GlcNAc...) (hybrid) asparagine; alternate) is linked at Asn71. A propeptide spans 209-227 (removed in mature form); it reads LSPTKNGSLKVFKRWDMGH. 2 N-linked (GlcNAc...) (high mannose) asparagine; alternate glycosylation sites follow: Asn308 and Asn366. N-linked (GlcNAc...) (hybrid) asparagine; alternate glycosylation is found at Asn308 and Asn366. N-linked (GlcNAc...) asparagine glycosylation occurs at Asn411. 2 disulfide bridges follow: Cys470–Cys475 and Cys474–Cys489. Asn526 is a glycosylation site (N-linked (GlcNAc...) (high mannose) asparagine; alternate). A glycan (N-linked (GlcNAc...) (hybrid) asparagine; alternate) is linked at Asn526.

It belongs to the phospholipase B-like family. As to quaternary structure, may form a homodimer, each monomer is composed of a chain A and a chain B. The maturation cleavages that produces chains A and B are required to open the putative substrate binding pocket. Both chains A and B remain associated in the mature protein. Expressed in neutrophils and monocytes.

The protein localises to the lysosome. Its function is as follows. In view of the small size of the putative binding pocket, it has been proposed that it may act as an amidase or a peptidase. Exhibits a weak phospholipase activity, acting on various phospholipids, including phosphatidylcholine, phosphatidylinositol, phosphatidylethanolamine and lysophospholipids. This chain is Phospholipase B-like 1 (PLBD1), found in Homo sapiens (Human).